The chain runs to 101 residues: Urease subunit beta (101 aa).

Belongs to the urease beta subunit family. Heterotrimer of UreA (gamma), UreB (beta) and UreC (alpha) subunits. Three heterotrimers associate to form the active enzyme.

The protein localises to the cytoplasm. It catalyses the reaction urea + 2 H2O + H(+) = hydrogencarbonate + 2 NH4(+). It participates in nitrogen metabolism; urea degradation; CO(2) and NH(3) from urea (urease route): step 1/1. The chain is Urease subunit beta from Rhizobium etli (strain ATCC 51251 / DSM 11541 / JCM 21823 / NBRC 15573 / CFN 42).